The primary structure comprises 181 residues: Dual-action ribosomal maturation protein DarP (181 aa).

The segment at 1-24 is disordered; that stretch reads MTGIKRPMSQYQDDNEWEDWGPSK.

This sequence belongs to the DarP family.

It is found in the cytoplasm. In terms of biological role, member of a network of 50S ribosomal subunit biogenesis factors which assembles along the 30S-50S interface, preventing incorrect 23S rRNA structures from forming. Promotes peptidyl transferase center (PTC) maturation. This Aeromonas hydrophila subsp. hydrophila (strain ATCC 7966 / DSM 30187 / BCRC 13018 / CCUG 14551 / JCM 1027 / KCTC 2358 / NCIMB 9240 / NCTC 8049) protein is Dual-action ribosomal maturation protein DarP.